The following is a 562-amino-acid chain: NAD-dependent malic enzyme (562 aa).

Tyr-101 serves as the catalytic Proton donor. Arg-154 is an NAD(+) binding site. The Proton acceptor role is filled by Lys-172. The a divalent metal cation site is built by Glu-243, Asp-244, and Asp-267. The NAD(+) site is built by Asp-267 and Asn-415.

The protein belongs to the malic enzymes family. Homotetramer. Mg(2+) serves as cofactor. Requires Mn(2+) as cofactor.

The catalysed reaction is (S)-malate + NAD(+) = pyruvate + CO2 + NADH. It carries out the reaction oxaloacetate + H(+) = pyruvate + CO2. In Idiomarina loihiensis (strain ATCC BAA-735 / DSM 15497 / L2-TR), this protein is NAD-dependent malic enzyme.